The primary structure comprises 154 residues: Ribosomal RNA large subunit methyltransferase H (154 aa).

Position 102 (G102) interacts with S-adenosyl-L-methionine.

Belongs to the RNA methyltransferase RlmH family. As to quaternary structure, homodimer.

Its subcellular location is the cytoplasm. The catalysed reaction is pseudouridine(1915) in 23S rRNA + S-adenosyl-L-methionine = N(3)-methylpseudouridine(1915) in 23S rRNA + S-adenosyl-L-homocysteine + H(+). Its function is as follows. Specifically methylates the pseudouridine at position 1915 (m3Psi1915) in 23S rRNA. The chain is Ribosomal RNA large subunit methyltransferase H from Caulobacter sp. (strain K31).